The sequence spans 34 residues: Ornithine carbamoyltransferase, catabolic (34 aa).

It belongs to the aspartate/ornithine carbamoyltransferase superfamily. OTCase family. As to quaternary structure, probably nonameric or dodecameric.

It is found in the cytoplasm. The enzyme catalyses carbamoyl phosphate + L-ornithine = L-citrulline + phosphate + H(+). Its pathway is amino-acid degradation; L-arginine degradation via ADI pathway; carbamoyl phosphate from L-arginine: step 2/2. The chain is Ornithine carbamoyltransferase, catabolic (arcB) from Pseudomonas putida (Arthrobacter siderocapsulatus).